The primary structure comprises 153 residues: Transcriptional repressor NrdR (153 aa).

A zinc finger lies at 3–34; sequence CPFCAHDDSQVKDSRPAEDNAAIRRRRQCSKC. The ATP-cone domain occupies 49 to 139; sequence VTVVKSDDKR…VYRDFSEARD (91 aa).

The protein belongs to the NrdR family. The cofactor is Zn(2+).

Functionally, negatively regulates transcription of bacterial ribonucleotide reductase nrd genes and operons by binding to NrdR-boxes. In Erythrobacter litoralis (strain HTCC2594), this protein is Transcriptional repressor NrdR.